We begin with the raw amino-acid sequence, 70 residues long: Neuropeptide SIFamide (70 aa).

A signal peptide spans 1–22; sequence MRFIVALCLFAIVMCIIHKAEG. F34 carries the phenylalanine amide modification. The propeptide occupies 38-70; it reads GVVEYDTTGRALSALCEIASETCQAWYQTLENK.

In terms of tissue distribution, expressed in antennal lobe (AL) and gnathal ganglion (GNG) with expression detected in most animals (at protein level). Not expressed in corpora cardiaca (CC) and corpora allata (CA) (at protein level).

The protein resides in the secreted. Functionally, ligand for the neuropeptide SIFamide receptor. The chain is Neuropeptide SIFamide from Agrotis ipsilon (Black cutworm moth).